Reading from the N-terminus, the 426-residue chain is Enolase (426 aa).

Q163 provides a ligand contact to (2R)-2-phosphoglycerate. The Proton donor role is filled by E205. Residues D242, E283, and D310 each contribute to the Mg(2+) site. (2R)-2-phosphoglycerate contacts are provided by K335, R364, S365, and K386. Residue K335 is the Proton acceptor of the active site.

The protein belongs to the enolase family. It depends on Mg(2+) as a cofactor.

It localises to the cytoplasm. Its subcellular location is the secreted. The protein resides in the cell surface. The enzyme catalyses (2R)-2-phosphoglycerate = phosphoenolpyruvate + H2O. It participates in carbohydrate degradation; glycolysis; pyruvate from D-glyceraldehyde 3-phosphate: step 4/5. In terms of biological role, catalyzes the reversible conversion of 2-phosphoglycerate (2-PG) into phosphoenolpyruvate (PEP). It is essential for the degradation of carbohydrates via glycolysis. This is Enolase from Beutenbergia cavernae (strain ATCC BAA-8 / DSM 12333 / CCUG 43141 / JCM 11478 / NBRC 16432 / NCIMB 13614 / HKI 0122).